The following is a 476-amino-acid chain: Sulfate adenylyltransferase subunit 1 (476 aa).

The tr-type G domain occupies 24–239 (KSLLRFLTCG…LLETVDVDHE (216 aa)). The segment at 33 to 40 (GSVDDGKS) is G1. 33–40 (GSVDDGKS) provides a ligand contact to GTP. A G2 region spans residues 91–95 (GITID). The interval 112–115 (DTPG) is G3. Residues 112 to 116 (DTPGH) and 167 to 170 (NKMD) each bind GTP. The tract at residues 167–170 (NKMD) is G4. The segment at 205 to 207 (SAL) is G5.

The protein belongs to the TRAFAC class translation factor GTPase superfamily. Classic translation factor GTPase family. CysN/NodQ subfamily. In terms of assembly, heterodimer composed of CysD, the smaller subunit, and CysN.

It catalyses the reaction sulfate + ATP + H(+) = adenosine 5'-phosphosulfate + diphosphate. The protein operates within sulfur metabolism; hydrogen sulfide biosynthesis; sulfite from sulfate: step 1/3. In terms of biological role, with CysD forms the ATP sulfurylase (ATPS) that catalyzes the adenylation of sulfate producing adenosine 5'-phosphosulfate (APS) and diphosphate, the first enzymatic step in sulfur assimilation pathway. APS synthesis involves the formation of a high-energy phosphoric-sulfuric acid anhydride bond driven by GTP hydrolysis by CysN coupled to ATP hydrolysis by CysD. The chain is Sulfate adenylyltransferase subunit 1 from Vibrio campbellii (strain ATCC BAA-1116).